A 257-amino-acid chain; its full sequence is Mating-type protein A2 (257 aa).

Positions 58-132 form a DNA-binding region, HMG box; it reads YTRPRNQFVL…EENWHKYTHY (75 aa). The interval 210–239 is disordered; that stretch reads QPKTKMNSNLSKLRFKSKQPPTPPEENSNV.

Belongs to the MATA2 family.

The protein localises to the nucleus. In terms of biological role, mating type proteins are sequence specific DNA-binding proteins that act as master switches in yeast differentiation by controlling gene expression in a cell type-specific fashion. Transcriptional activator that induces the transcription of a-specific genes. This Kluyveromyces lactis (strain ATCC 8585 / CBS 2359 / DSM 70799 / NBRC 1267 / NRRL Y-1140 / WM37) (Yeast) protein is Mating-type protein A2 (MATA2).